A 263-amino-acid chain; its full sequence is Hemophilin (263 aa).

Residues 1–20 (MKISQLFLGLVACSTAFAYA) form the signal peptide. Positions 42, 58, 104, and 105 each coordinate heme b.

In terms of assembly, monomer in solution. Interacts with host hemoglobin.

It is found in the secreted. Its function is as follows. Part of a high affinity heme acquisition system. Functions as a hemophore that acquires heme from human hemoglobin and delivers the heme to its cognate receptor, HphR, facilitating transport of heme across the bacterial outer membrane. Apo HphA interacts specifically with human hemoglobin and steals heme through a passive process probably due to its high affinity for heme. It can also acquire heme complexed to human serum albumin. Plays a supporting role for full virulence, acting as an accessory factor that enhances the process of heme uptake. In Acinetobacter baumannii, this protein is Hemophilin.